Consider the following 59-residue polypeptide: DNA-directed RNA polymerase subunit Rpo6 (59 aa).

The protein belongs to the archaeal Rpo6/eukaryotic RPB6 RNA polymerase subunit family. As to quaternary structure, part of the RNA polymerase complex.

It localises to the cytoplasm. It carries out the reaction RNA(n) + a ribonucleoside 5'-triphosphate = RNA(n+1) + diphosphate. In terms of biological role, DNA-dependent RNA polymerase (RNAP) catalyzes the transcription of DNA into RNA using the four ribonucleoside triphosphates as substrates. The protein is DNA-directed RNA polymerase subunit Rpo6 of Halorubrum lacusprofundi (strain ATCC 49239 / DSM 5036 / JCM 8891 / ACAM 34).